We begin with the raw amino-acid sequence, 404 residues long: Serine/threonine-protein kinase UCN (404 aa).

The Protein kinase domain occupies 22–340 (LKVLKLLGKG…AAEIKEHAFF (319 aa)). ATP-binding positions include 28-36 (LGKGATGTV) and lysine 55. Residue aspartate 153 is the Proton acceptor of the active site. The tract at residues 185 to 207 (EFYHLSDPEPDPNPESNLSHNKK) is disordered. An AGC-kinase C-terminal domain is found at 341-404 (KGVRWELLTE…CSENNPFVDF (64 aa)).

The protein belongs to the protein kinase superfamily. AGC Ser/Thr protein kinase family. Expressed in the epidermis and cortex of the transition zone of the root apex and developing flowers. Expressed in rosette leaves, stems and siliques.

It localises to the cytoplasm. The protein localises to the nucleus. The catalysed reaction is L-seryl-[protein] + ATP = O-phospho-L-seryl-[protein] + ADP + H(+). It carries out the reaction L-threonyl-[protein] + ATP = O-phospho-L-threonyl-[protein] + ADP + H(+). In terms of biological role, regulates planar ovule integument development by suppressing aberrantly oriented growth. Maintains planar growth of integuments by repressing the developmental regulator and transcription factor KAN4 which is involved in the control of early integument growth and polarity. Restricts growth in stamen filaments, petals, and cotyledons. In Arabidopsis thaliana (Mouse-ear cress), this protein is Serine/threonine-protein kinase UCN.